Consider the following 87-residue polypeptide: Small ribosomal subunit protein bS20 (87 aa).

Belongs to the bacterial ribosomal protein bS20 family.

In terms of biological role, binds directly to 16S ribosomal RNA. The protein is Small ribosomal subunit protein bS20 of Corynebacterium diphtheriae (strain ATCC 700971 / NCTC 13129 / Biotype gravis).